A 262-amino-acid polypeptide reads, in one-letter code: MDPRLSTVRQTCCCFNVRIATTALAIYHVIMSVLLFIEHSVEVAHGKASCKLSQMGYLRIADLISSFLLITMLFIISLSLLIGVVKNREKYLLPFLSLQIMDYLLCLLTLLGSYIELPAYLKLASRSRASSSKFPLMTLQLLDFCLSILTLCSSYMEVPTYLNFKSMNHMNYLPSQEDMPHNQFIKMMIIFSIAFITVLIFKVYMFKCVWRCYRLIKCMNSVEEKRNSKMLQKVVLPSYEEALSLPSKTPEGGPAPPPYSEV.

The next 5 helical transmembrane spans lie at 19 to 39, 64 to 84, 92 to 112, 134 to 154, and 184 to 204; these read IATT…FIEH, ISSF…LIGV, LLPF…TLLG, FPLM…LCSS, and FIKM…FKVY. A Phosphotyrosine modification is found at tyrosine 259.

This sequence belongs to the LAPTM4/LAPTM5 transporter family. In terms of assembly, binds to ubiquitin. In terms of tissue distribution, preferentially expressed in adult hematopoietic tissues. High levels in lymphoid and myeloid tissues. Highly expressed in peripheral blood leukocytes, thymus, spleen and lung, followed by placenta, liver and kidney.

The protein resides in the lysosome membrane. May have a special functional role during embryogenesis and in adult hematopoietic cells. The chain is Lysosomal-associated transmembrane protein 5 (LAPTM5) from Homo sapiens (Human).